The primary structure comprises 65 residues: uncharacterized protein (65 aa).

This is an uncharacterized protein from Homo sapiens (Human).